A 519-amino-acid chain; its full sequence is Cytosol aminopeptidase (519 aa).

Serine 42 carries the post-translational modification Phosphoserine. Position 45 is an N6-succinyllysine (lysine 45). Serine 54 bears the Phosphoserine mark. An N6-succinyllysine mark is found at lysine 61 and lysine 103. 2 positions are modified to phosphoserine: serine 180 and serine 194. Positions 202 and 203 each coordinate Zn(2+). Lysine 221 bears the N6-acetyllysine; alternate mark. Residue lysine 221 is modified to N6-succinyllysine; alternate. Serine 238 bears the Phosphoserine mark. Lysine 282 and aspartate 287 together coordinate Zn(2+). Substrate is bound by residues lysine 282, aspartate 287, serine 292, and lysine 294. Aspartate 287 is a binding site for Mg(2+). Residue lysine 294 is part of the active site. Residues arginine 303, aspartate 305, aspartate 364, and glutamate 366 each contribute to the Zn(2+) site. Residues aspartate 305 and aspartate 364 each coordinate substrate. Residues aspartate 364 and glutamate 366 each coordinate Mg(2+). Residue arginine 368 is part of the active site. Lysine 455 is subject to N6-acetyllysine; alternate. Lysine 455 bears the N6-succinyllysine; alternate mark. Lysine 476 is subject to N6-succinyllysine. An N6-acetyllysine; alternate modification is found at lysine 489. The residue at position 489 (lysine 489) is an N6-succinyllysine; alternate.

The protein belongs to the peptidase M17 family. As to quaternary structure, homohexamer. Zn(2+) serves as cofactor. Requires Mn(2+) as cofactor.

The protein localises to the cytoplasm. The enzyme catalyses Release of an N-terminal amino acid, Xaa-|-Yaa-, in which Xaa is preferably Leu, but may be other amino acids including Pro although not Arg or Lys, and Yaa may be Pro. Amino acid amides and methyl esters are also readily hydrolyzed, but rates on arylamides are exceedingly low.. It carries out the reaction an S-substituted L-cysteinylglycine + H2O = an S-substituted L-cysteine + glycine. The catalysed reaction is L-cysteinylglycine + H2O = L-cysteine + glycine. It catalyses the reaction S-benzyl-L-cysteinylglycine + H2O = S-benzyl-L-cysteine + glycine. The enzyme catalyses Release of N-terminal proline from a peptide.. Its activity is regulated as follows. Bimane-S-cysteinylglycine-hydrolyzing activity is inhibited by o-phenanthroline or bestatin, and is activated by the addition of zinc chloride. Cytosolic metallopeptidase that catalyzes the removal of unsubstituted N-terminal hydrophobic amino acids from various peptides. The presence of Zn(2+) ions is essential for the peptidase activity, and the association with other cofactors can modulate the substrate spectificity of the enzyme. For instance, in the presence of Mn(2+), it displays a specific Cys-Gly hydrolyzing activity of Cys-Gly-S-conjugates. Involved in the metabolism of glutathione and in the degradation of glutathione S-conjugates, which may play a role in the control of the cell redox status. The sequence is that of Cytosol aminopeptidase from Rattus norvegicus (Rat).